The chain runs to 361 residues: Molybdenum import ATP-binding protein ModC (361 aa).

An ABC transporter domain is found at 1 to 228 (MLNINIEKQL…EQMRPWVPLQ (228 aa)). 31 to 38 (GRSGAGKT) provides a ligand contact to ATP. The 68-residue stretch at 289-356 (GSSVRNLLRG…IKGVTMTQMD (68 aa)) folds into the Mop domain.

It belongs to the ABC transporter superfamily. Molybdate importer (TC 3.A.1.8) family. In terms of assembly, the complex is composed of two ATP-binding proteins (ModC), two transmembrane proteins (ModB) and a solute-binding protein (ModA).

It localises to the cell inner membrane. The catalysed reaction is molybdate(out) + ATP + H2O = molybdate(in) + ADP + phosphate + H(+). In terms of biological role, part of the ABC transporter complex ModABC involved in molybdenum import. Responsible for energy coupling to the transport system. This Shewanella sp. (strain MR-7) protein is Molybdenum import ATP-binding protein ModC.